The chain runs to 548 residues: pH-responsive protein 1 (548 aa).

The signal sequence occupies residues 1–20 (MYSLIKSLATFATLFSLTLA). The N-linked (GlcNAc...) asparagine glycan is linked to Asn41. A disulfide bond links Cys82 and Cys111. N-linked (GlcNAc...) asparagine glycans are attached at residues Asn173 and Asn261. 5 disulfides stabilise this stretch: Cys224/Cys358, Cys242/Cys273, Cys381/Cys432, Cys390/Cys456, and Cys409/Cys414. The disordered stretch occupies residues 483-518 (GKASSSGGSSKSGSSSASASGSSSSSTSSGSSSSSG). Ser517 is lipidated: GPI-anchor amidated serine. Residues 518 to 548 (GVKATQQMSMVKLVSIITIVTAFVGGMSVVF) constitute a propeptide, removed in mature form.

It belongs to the glycosyl hydrolase 72 family.

Its subcellular location is the cell membrane. Functionally, required for apical cell growth and plays an essential role in morphogenesis. May be integral to the pathogenic ability of the organism. In Candida albicans (strain SC5314 / ATCC MYA-2876) (Yeast), this protein is pH-responsive protein 1 (PHR1).